A 438-amino-acid polypeptide reads, in one-letter code: Protein SPMIP7 (438 aa).

Testis-specific.

Its function is as follows. Essential for normal spermatogenesis. The polypeptide is Protein SPMIP7 (Homo sapiens (Human)).